Reading from the N-terminus, the 389-residue chain is Cellobiose 2-epimerase (389 aa).

Belongs to the cellobiose 2-epimerase family. In terms of assembly, monomer.

It catalyses the reaction D-cellobiose = beta-D-glucosyl-(1-&gt;4)-D-mannopyranose. Catalyzes the reversible epimerization of cellobiose to 4-O-beta-D-glucopyranosyl-D-mannose (Glc-Man). Catalyzes epimerization but also isomerization for beta-1,4- and alpha-1,4-gluco-oligosaccharides. Can use cellobiose, lactose, cellotriose, maltose and maltotriose. The chain is Cellobiose 2-epimerase from Dictyoglomus turgidum (strain DSM 6724 / Z-1310).